A 354-amino-acid chain; its full sequence is S-adenosylmethionine:tRNA ribosyltransferase-isomerase (354 aa).

It belongs to the QueA family. In terms of assembly, monomer.

The protein localises to the cytoplasm. The enzyme catalyses 7-aminomethyl-7-carbaguanosine(34) in tRNA + S-adenosyl-L-methionine = epoxyqueuosine(34) in tRNA + adenine + L-methionine + 2 H(+). It participates in tRNA modification; tRNA-queuosine biosynthesis. Functionally, transfers and isomerizes the ribose moiety from AdoMet to the 7-aminomethyl group of 7-deazaguanine (preQ1-tRNA) to give epoxyqueuosine (oQ-tRNA). This chain is S-adenosylmethionine:tRNA ribosyltransferase-isomerase, found in Methylobacterium radiotolerans (strain ATCC 27329 / DSM 1819 / JCM 2831 / NBRC 15690 / NCIMB 10815 / 0-1).